The chain runs to 554 residues: Glucose-6-phosphate isomerase (554 aa).

Glu-359 (proton donor) is an active-site residue. Active-site residues include His-390 and Lys-518.

This sequence belongs to the GPI family.

The protein resides in the cytoplasm. It catalyses the reaction alpha-D-glucose 6-phosphate = beta-D-fructose 6-phosphate. Its pathway is carbohydrate biosynthesis; gluconeogenesis. It participates in carbohydrate degradation; glycolysis; D-glyceraldehyde 3-phosphate and glycerone phosphate from D-glucose: step 2/4. Its function is as follows. Catalyzes the reversible isomerization of glucose-6-phosphate to fructose-6-phosphate. This chain is Glucose-6-phosphate isomerase, found in Pseudomonas putida (strain ATCC 700007 / DSM 6899 / JCM 31910 / BCRC 17059 / LMG 24140 / F1).